The sequence spans 417 residues: NADH-quinone oxidoreductase subunit D (417 aa).

It belongs to the complex I 49 kDa subunit family. NDH-1 is composed of 14 different subunits. Subunits NuoB, C, D, E, F, and G constitute the peripheral sector of the complex.

The protein localises to the cell inner membrane. The enzyme catalyses a quinone + NADH + 5 H(+)(in) = a quinol + NAD(+) + 4 H(+)(out). In terms of biological role, NDH-1 shuttles electrons from NADH, via FMN and iron-sulfur (Fe-S) centers, to quinones in the respiratory chain. The immediate electron acceptor for the enzyme in this species is believed to be ubiquinone. Couples the redox reaction to proton translocation (for every two electrons transferred, four hydrogen ions are translocated across the cytoplasmic membrane), and thus conserves the redox energy in a proton gradient. This is NADH-quinone oxidoreductase subunit D from Polaromonas sp. (strain JS666 / ATCC BAA-500).